We begin with the raw amino-acid sequence, 113 residues long: Hydrogenase maturation factor HypA (113 aa).

A Ni(2+)-binding site is contributed by His-2. Residues Cys-73, Cys-76, Cys-89, and Cys-92 each contribute to the Zn(2+) site.

The protein belongs to the HypA/HybF family.

Involved in the maturation of [NiFe] hydrogenases. Required for nickel insertion into the metal center of the hydrogenase. In Chlorobium phaeobacteroides (strain BS1), this protein is Hydrogenase maturation factor HypA.